The chain runs to 833 residues: Copper-exporting P-type ATPase (833 aa).

HMA domains lie at 3–64 (QTID…YGAT) and 98–161 (ESQQ…YGAE). 4 residues coordinate Cu(+): Cys-14, Cys-17, Cys-109, and Cys-112. 6 consecutive transmembrane segments (helical) span residues 186 to 206 (WQAIVALAVGIPVMVWGMIGD), 217 to 237 (LWLAIGLITLAVMVFAGGHFY), 253 to 273 (TLVALGTGVAWLYSMSVNLWP), 283 to 303 (LYYEASAMIIGLINLGHMLEA), 437 to 457 (AVFVPVVVAIALFSAAIWYFF), and 463 to 483 (IVYTLVIATTVLIIACPCALG). The 4-aspartylphosphate intermediate role is filled by Asp-522. Residues Asp-719 and Asp-723 each contribute to the Mg(2+) site. Helical transmembrane passes span 778 to 798 (LGAFIYNSIGIPVAAGILWPF) and 800 to 820 (GTLLNPVVAGAAMALSSITVV).

It belongs to the cation transport ATPase (P-type) (TC 3.A.3) family. Type IB subfamily.

The protein resides in the cell inner membrane. It is found in the cytoplasm. The catalysed reaction is Cu(+)(in) + ATP + H2O = Cu(+)(out) + ADP + phosphate + H(+). Its function is as follows. Involved in Cu(+) export. Essential for copper tolerance under both aerobic and anaerobic conditions. In terms of biological role, probably also encodes a cytoplasmic copper chaperone CopA(Z) that is produced by programmed ribosomal frameshifting. This is Copper-exporting P-type ATPase (copA) from Salmonella typhimurium (strain LT2 / SGSC1412 / ATCC 700720).